The sequence spans 860 residues: DNA gyrase subunit A (860 aa).

Residues 34–503 (LPDARDGLKP…EDGELIDTDL (470 aa)) enclose the Topo IIA-type catalytic domain. Tyr122 (O-(5'-phospho-DNA)-tyrosine intermediate) is an active-site residue. Residues 530-536 (QNRATRG) carry the GyrA-box motif.

The protein belongs to the type II topoisomerase GyrA/ParC subunit family. As to quaternary structure, heterotetramer, composed of two GyrA and two GyrB chains. In the heterotetramer, GyrA contains the active site tyrosine that forms a transient covalent intermediate with DNA, while GyrB binds cofactors and catalyzes ATP hydrolysis.

The protein localises to the cytoplasm. It catalyses the reaction ATP-dependent breakage, passage and rejoining of double-stranded DNA.. A type II topoisomerase that negatively supercoils closed circular double-stranded (ds) DNA in an ATP-dependent manner to modulate DNA topology and maintain chromosomes in an underwound state. Negative supercoiling favors strand separation, and DNA replication, transcription, recombination and repair, all of which involve strand separation. Also able to catalyze the interconversion of other topological isomers of dsDNA rings, including catenanes and knotted rings. Type II topoisomerases break and join 2 DNA strands simultaneously in an ATP-dependent manner. This Synechocystis sp. (strain ATCC 27184 / PCC 6803 / Kazusa) protein is DNA gyrase subunit A.